The primary structure comprises 1367 residues: Collagen alpha-1(XV) chain (1367 aa).

An N-terminal signal peptide occupies residues 1–31; the sequence is MTHRRTAQGRRPRWLLSIISALLSAVLQTRA. The Laminin G-like domain occupies 54 to 249; the sequence is SVSFTTGYGG…SSASGEASGF (196 aa). Residues 229–604 are nonhelical region 1 (NC1); the sequence is RTPEELCEAQ…DIVGNEDLLR (376 aa). Ser243 and Ser247 each carry an O-linked (Xyl...) (chondroitin sulfate) serine glycan. Residues 267–319 form a disordered region; it reads APPKESHVDPISVPPTSSSPAEDSELSGEPVPEGTPETNLSIIGHSSPEQGSG. N-linked (GlcNAc...) asparagine glycosylation is found at Asn305 and Asn323. O-linked (Xyl...) (chondroitin sulfate) serine glycosylation is present at Ser341. 3 N-linked (GlcNAc...) asparagine glycosylation sites follow: Asn348, Asn375, and Asn402. Disordered stretches follow at residues 396-446 and 529-784; these read DTPD…SHGE and TAEP…GHVE. Over residues 402–429 the composition is skewed to polar residues; that stretch reads NLTTTASGDGEVPTSTDGDTEADSSPTG. Positions 434–446 are enriched in basic and acidic residues; the sequence is KPREEATLGSHGE. Pro residues predominate over residues 555-564; sequence PSGPPLPTPT. Residues 582-595 show a composition bias toward gly residues; the sequence is GPVGGLDEGSGSGD. Collagen-like domains are found at residues 605-665 and 666-717; these read GPPG…GMKG and EKGA…PPGP. Residues 605–718 form a triple-helical region 1 (COL1) region; it reads GPPGPPGPPG…PGPPGPPGPG (114 aa). Pro residues predominate over residues 606 to 616; that stretch reads PPGPPGPPGSP. Asn673 is a glycosylation site (N-linked (GlcNAc...) asparagine). The span at 703 to 717 shows a compositional bias: pro residues; the sequence is MGPPGPPGPPGPPGP. The interval 719–748 is nonhelical region 2 (NC2); that stretch reads CTTELGFEIEGSGDVRLLSKPTISGPTSPS. A glycan (O-linked (Xyl...) (chondroitin sulfate) serine) is linked at Ser730. The segment covering 737 to 750 has biased composition (low complexity); the sequence is SKPTISGPTSPSGP. Positions 749–783 are triple-helical region 2 (COL2); that stretch reads GPKGEKGEQGAKGERGADGTSTMGPPGPRGPPGHV. The span at 751 to 765 shows a compositional bias: basic and acidic residues; sequence KGEKGEQGAKGERGA. The segment at 784–807 is nonhelical region 3 (NC3); sequence EVLSSSLINITNGSMNFSDIPELM. 3 N-linked (GlcNAc...) asparagine glycosylation sites follow: Asn792, Asn795, and Asn799. 2 Collagen-like domains span residues 808–850 and 863–912; these read GPPG…GEPG and KGRK…GDRG. A triple-helical region 3 (COL3) region spans residues 808-852; sequence GPPGPDGVPGLPGFPGPRGPKGDTGVPGFPGLKGEQGEKGEPGAI. The tract at residues 853-863 is nonhelical region 4 (NC4); sequence LTGDVPLEMMK. The interval 864–934 is triple-helical region 4 (COL4); sequence GRKGEPGIHG…PGPPGPPGAV (71 aa). A disordered region spans residues 905 to 930; it reads KGAKGDRGVTLPGPPGLPGPPGPPGP. A compositionally biased stretch (pro residues) spans 916 to 930; that stretch reads PGPPGLPGPPGPPGP. The tract at residues 935 to 968 is nonhelical region 5 (NC5); that stretch reads VNIKGAVFPIPARPHCKTPVGTAHPGDPELVTFH. The tract at residues 969–998 is triple-helical region 5 (COL5); sequence GVKGEKGSWGLPGSKGEKGDQGAQGPPGPP. 2 disordered regions span residues 974-1000 and 1055-1089; these read KGSW…PPVD and GPPG…PAIL. The interval 999–1031 is nonhelical region 6 (NC6); it reads VDPAYLRHFLNSLKGENEDASFRGESSNNLFVS. The interval 1032 to 1086 is triple-helical region 6 (COL6); that stretch reads GPPGLPGYPGLVGQKGEAVVGPQGPPGIPGLPGPPGFGRPGVPGPPGPPGPPGPP. The segment covering 1055–1086 has biased composition (pro residues); the sequence is GPPGIPGLPGPPGFGRPGVPGPPGPPGPPGPP. Residues 1087–1096 are nonhelical region 7 (NC7); it reads AILGAAVALP. The segment at 1097–1111 is triple-helical region 7 (COL7); it reads GPPGPPGQPGLPGSR. Residues 1112–1367 form a nonhelical region 8 (NC8) region; sequence NLVTALSDMG…ENSFMTDTRK (256 aa). Disulfide bonds link Cys1216–Cys1356 and Cys1318–Cys1348.

Belongs to the multiplexin collagen family. Trimer; disulfide-linked. As to quaternary structure, interacts moderately with EFEMP2. Prolines at the third position of the tripeptide repeating unit (G-X-Y) are hydroxylated in some or all of the chains. Post-translationally, O-glycosylated; contains chondroitin sulfate. Detected in testis, brain, heart, kidney, skeletal muscle and skin (at protein level). Detected in heart and skeletal muscle.

Its subcellular location is the secreted. The protein resides in the extracellular space. It localises to the extracellular matrix. Structural protein that stabilizes microvessels and muscle cells, both in heart and in skeletal muscle. In terms of biological role, restin potently inhibits angiogenesis. The chain is Collagen alpha-1(XV) chain (Col15a1) from Mus musculus (Mouse).